Here is a 445-residue protein sequence, read N- to C-terminus: Glucose-6-phosphate isomerase (445 aa).

Glu-284 serves as the catalytic Proton donor. Active-site residues include His-305 and Lys-419.

This sequence belongs to the GPI family.

Its subcellular location is the cytoplasm. It carries out the reaction alpha-D-glucose 6-phosphate = beta-D-fructose 6-phosphate. It functions in the pathway carbohydrate biosynthesis; gluconeogenesis. The protein operates within carbohydrate degradation; glycolysis; D-glyceraldehyde 3-phosphate and glycerone phosphate from D-glucose: step 2/4. In terms of biological role, catalyzes the reversible isomerization of glucose-6-phosphate to fructose-6-phosphate. This Leptospira interrogans serogroup Icterohaemorrhagiae serovar Lai (strain 56601) protein is Glucose-6-phosphate isomerase.